The chain runs to 472 residues: MVKLTMEPVTRIEGHAKITVHLDDAGNVEDTRLHVMEFRGFEKFLQGRPIEEAPRIVPRICGICDVQHHLAAAKAVDACFGFEPDDVLPAAYKMREIMNWGSYMHSHGLHFYFLAAPDFIAGKDRKTRNVFQIIKDAPDVALQAIELRKNALEIVRATGGRPIHPTSSTPGGISTELDDETQKDLLQKAQRNVELAEATLELAVPIFEENIDLVNSLGNIETYHTGLVKNGVWDVYDGIVRIKDKEGNLFREFKPADYADTIAEHVKPYSWLKFPYIKDLGYPDGVYRVSPLSRLNVADKMPDAAPKAQDYFKEFQDKFGYAQQTLLYHWARLIEVLACAECAADALEGDLSGEKFPDSLERQAGDGVGIVEAPRGTLTHHYTCDENGLITKANIVVATIQNNPAMEMGIQKVAQDYIKPGVEVDDKIFNLMEMVIRAYDPCLSCATHTIDSQMRLATLEVYDSEGDLVKRI.

Cysteine 61, cysteine 64, cysteine 442, and cysteine 445 together coordinate Ni(2+).

The protein belongs to the [NiFe]/[NiFeSe] hydrogenase large subunit family. As to quaternary structure, the F420-non-reducing hydrogenase is composed of three subunits; MvhA, MvhD and MvhG. It forms a complex with the heterodisulfide reductase (hdr). Requires Ni(2+) as cofactor.

Functionally, part of a complex that provides reducing equivalents for heterodisulfide reductase. This is F420-non-reducing hydrogenase subunit A (mvhA) from Methanothermobacter marburgensis (strain ATCC BAA-927 / DSM 2133 / JCM 14651 / NBRC 100331 / OCM 82 / Marburg) (Methanobacterium thermoautotrophicum).